Here is a 637-residue protein sequence, read N- to C-terminus: Threonine--tRNA ligase (637 aa).

A TGS domain is found at 1–61 (MIKVTLKDGK…DKDCNLEILT (61 aa)). Residues 242-532 (DHRKIGKELD…LIEHYAGAFP (291 aa)) form a catalytic region. Residues Cys333, His384, and His509 each coordinate Zn(2+).

Belongs to the class-II aminoacyl-tRNA synthetase family. In terms of assembly, homodimer. The cofactor is Zn(2+).

It is found in the cytoplasm. The catalysed reaction is tRNA(Thr) + L-threonine + ATP = L-threonyl-tRNA(Thr) + AMP + diphosphate + H(+). Functionally, catalyzes the attachment of threonine to tRNA(Thr) in a two-step reaction: L-threonine is first activated by ATP to form Thr-AMP and then transferred to the acceptor end of tRNA(Thr). Also edits incorrectly charged L-seryl-tRNA(Thr). This chain is Threonine--tRNA ligase, found in Clostridium acetobutylicum (strain ATCC 824 / DSM 792 / JCM 1419 / IAM 19013 / LMG 5710 / NBRC 13948 / NRRL B-527 / VKM B-1787 / 2291 / W).